Consider the following 76-residue polypeptide: Conotoxin ArMLCL-022 (76 aa).

An N-terminal signal peptide occupies residues 1–19 (MLCLPVFIILLLLASTAAS). A propeptide spanning residues 20 to 52 (NPLETRIQSDLIRAALEDADMKTERGFLGVLMK) is cleaved from the precursor.

Belongs to the conotoxin T superfamily. In terms of tissue distribution, expressed by the venom duct.

It localises to the secreted. The sequence is that of Conotoxin ArMLCL-022 from Conus arenatus (Sand-dusted cone).